We begin with the raw amino-acid sequence, 318 residues long: Taste receptor type 2 member 14 (318 aa).

Residues 1–7 are Extracellular-facing; that stretch reads MGGVIKN. Residues 8–28 traverse the membrane as a helical segment; sequence ISTFVLIVEFIIGNLGNSFIA. Topologically, residues 29-55 are cytoplasmic; the sequence is LVNCIDWVKRRKISLVDQLLTALAISR. The chain crosses the membrane as a helical span at residues 56-76; that stretch reads ISLVWLIFGSWCVSAFFPALF. Over 77 to 87 the chain is Extracellular; the sequence is ATEKMFRMLTN. Cholesterol-binding residues include Thr86 and Trp89. Residues 88–108 traverse the membrane as a helical segment; sequence IWAVTNHFSVWLATGLGTFYF. Topologically, residues 109–129 are cytoplasmic; the sequence is LKIANFSNSIFIYLKWRVKKV. The chain crosses the membrane as a helical span at residues 130–150; sequence VLVLLLVTSVFLFLNIALINI. Over 151-184 the chain is Extracellular; sequence HINASINGYGGNKTCSSDSNDFTRFSSLIALTSS. Residues Asn153 and Asn162 are each glycosylated (N-linked (GlcNAc...) asparagine). Residue Ala180 coordinates cholesterol. The helical transmembrane segment at 185-205 threads the bilayer; it reads VFIFIPFILSLAIFLLLTFSL. Topologically, residues 206-232 are cytoplasmic; the sequence is WKHCKKMQHTVKASGDASTKAHRGVMQ. Residues 233–253 form a helical membrane-spanning segment; it reads TVIAFLLLYPIFSLSFFIAVW. The Extracellular segment spans residues 254 to 261; sequence TSGWLEEN. Residues 262–282 form a helical membrane-spanning segment; it reads LIILSQVMGMAYPSCHSCILI. Cholesterol is bound by residues Leu265 and Val268. Residues 283 to 317 lie on the Cytoplasmic side of the membrane; sequence LGNKKLRQASLSVLWWLKYRFKDGEPSGHKGFRES.

It belongs to the G-protein coupled receptor T2R family. In terms of assembly, core component of the TAS2R14-GNAI1 complex, consisting of TAS2R14, GNAI1, GNB1 and GNG2; within the complex interacts with GNAI1. Core component of the TAS2R14-GNAT3 complex, consisting of TAS2R14, GNAT3, GNB1 and GNG2; within the complex interacts with GNAT3. Core component of the TAS2R14-GNAS2 complex, consisting of TAS2R14, GNAS2, GNB1 and GNG2; within the complex interacts with GNAS2.

The protein resides in the membrane. It carries out the reaction Ca(2+)(in) = Ca(2+)(out). The enzyme catalyses 3',5'-cyclic AMP(in) = 3',5'-cyclic AMP(out). Its activity is regulated as follows. Basal activity is enhanced by binding to bitter tastants, such as flufenamic acid and aristolochic acid. Regulated by cholesterol in a concentration-dependent manner. Gustducin-linked G-protein coupled receptor that plays a role in the perception of bitterness. The activity of this receptor stimulates GNAT3, activating the gustducin G-protein pathway. Likely plays a role in sensing the chemical composition of the gastrointestinal content and other extra-oral tissues via the inhibitory G-protein pathways. The polypeptide is Taste receptor type 2 member 14 (TAS2R14) (Pongo pygmaeus (Bornean orangutan)).